Here is a 666-residue protein sequence, read N- to C-terminus: tRNA 5-methylaminomethyl-2-thiouridine biosynthesis bifunctional protein MnmC (666 aa).

The tract at residues 1–245 (MKQYAIQPAT…KREMLCGVME (245 aa)) is tRNA (mnm(5)s(2)U34)-methyltransferase. Positions 270–666 (IGGGIASALL…RKLLKGKAVK (397 aa)) are FAD-dependent cmnm(5)s(2)U34 oxidoreductase.

The protein in the N-terminal section; belongs to the methyltransferase superfamily. tRNA (mnm(5)s(2)U34)-methyltransferase family. In the C-terminal section; belongs to the DAO family. It depends on FAD as a cofactor.

It is found in the cytoplasm. It catalyses the reaction 5-aminomethyl-2-thiouridine(34) in tRNA + S-adenosyl-L-methionine = 5-methylaminomethyl-2-thiouridine(34) in tRNA + S-adenosyl-L-homocysteine + H(+). Functionally, catalyzes the last two steps in the biosynthesis of 5-methylaminomethyl-2-thiouridine (mnm(5)s(2)U) at the wobble position (U34) in tRNA. Catalyzes the FAD-dependent demodification of cmnm(5)s(2)U34 to nm(5)s(2)U34, followed by the transfer of a methyl group from S-adenosyl-L-methionine to nm(5)s(2)U34, to form mnm(5)s(2)U34. The chain is tRNA 5-methylaminomethyl-2-thiouridine biosynthesis bifunctional protein MnmC from Salmonella choleraesuis (strain SC-B67).